A 425-amino-acid chain; its full sequence is Serine--tRNA ligase (425 aa).

230–232 (TAE) contributes to the L-serine binding site. 261-263 (RSE) serves as a coordination point for ATP. E284 contacts L-serine. 348 to 351 (EISS) serves as a coordination point for ATP. S384 provides a ligand contact to L-serine.

It belongs to the class-II aminoacyl-tRNA synthetase family. Type-1 seryl-tRNA synthetase subfamily. In terms of assembly, homodimer. The tRNA molecule binds across the dimer.

It localises to the cytoplasm. It catalyses the reaction tRNA(Ser) + L-serine + ATP = L-seryl-tRNA(Ser) + AMP + diphosphate + H(+). The catalysed reaction is tRNA(Sec) + L-serine + ATP = L-seryl-tRNA(Sec) + AMP + diphosphate + H(+). It functions in the pathway aminoacyl-tRNA biosynthesis; selenocysteinyl-tRNA(Sec) biosynthesis; L-seryl-tRNA(Sec) from L-serine and tRNA(Sec): step 1/1. In terms of biological role, catalyzes the attachment of serine to tRNA(Ser). Is also able to aminoacylate tRNA(Sec) with serine, to form the misacylated tRNA L-seryl-tRNA(Sec), which will be further converted into selenocysteinyl-tRNA(Sec). This chain is Serine--tRNA ligase, found in Streptococcus pyogenes serotype M12 (strain MGAS2096).